The primary structure comprises 250 residues: Transcriptional activator protein ExpR (250 aa).

The 66-residue stretch at Lys173–Asn238 folds into the HTH luxR-type domain. Residues Tyr197–Gly216 constitute a DNA-binding region (H-T-H motif).

Belongs to the autoinducer-regulated transcriptional regulatory protein family.

Its function is as follows. Functions as an OHLL responsive transcriptional regulator that acts in virulence (soft rot disease) through the activation of genes for plant tissue macerating enzymes. This Dickeya dadantii (strain 3937) (Erwinia chrysanthemi (strain 3937)) protein is Transcriptional activator protein ExpR (expR).